Consider the following 66-residue polypeptide: Small ribosomal subunit protein bS21 (66 aa).

This sequence belongs to the bacterial ribosomal protein bS21 family.

The protein is Small ribosomal subunit protein bS21 of Rickettsia peacockii (strain Rustic).